We begin with the raw amino-acid sequence, 195 residues long: Thioredoxin reductase-like selenoprotein T (195 aa).

Positions 1-19 (MRLLLLLLVAASAVVRSDA) are cleaved as a signal peptide. The segment at residues 46-49 (CVSU) is a cross-link (cysteinyl-selenocysteine (Cys-Sec)). Residue selenocysteine 49 is a non-standard amino acid, selenocysteine. Residues 85–103 (IASFLSVFKLVLIGLIIVG) form a helical membrane-spanning segment.

The protein belongs to the SelWTH family. Selenoprotein T subfamily. May contain a selenide-sulfide bond between Cys-46 and Sec-49. This bond is speculated to serve as redox-active pair.

It localises to the endoplasmic reticulum membrane. It catalyses the reaction [thioredoxin]-dithiol + NADP(+) = [thioredoxin]-disulfide + NADPH + H(+). Selenoprotein with thioredoxin reductase-like oxidoreductase activity. Protects dopaminergic neurons against oxidative stress and cell death. Involved in ADCYAP1/PACAP-induced calcium mobilization and neuroendocrine secretion. Plays a role in fibroblast anchorage and redox regulation. In gastric smooth muscle, modulates the contraction processes through the regulation of calcium release and MYLK activation. In pancreatic islets, involved in the control of glucose homeostasis, contributes to prolonged ADCYAP1/PACAP-induced insulin secretion. This chain is Thioredoxin reductase-like selenoprotein T, found in Bos taurus (Bovine).